A 262-amino-acid polypeptide reads, in one-letter code: Type III pantothenate kinase (262 aa).

An ATP-binding site is contributed by 6-13; that stretch reads DVGNTNAV. Substrate is bound by residues tyrosine 100 and 107 to 110; that span reads GADR. Residue aspartate 109 is the Proton acceptor of the active site. Aspartate 129 lines the K(+) pocket. ATP is bound at residue threonine 132. Substrate is bound at residue threonine 184.

It belongs to the type III pantothenate kinase family. As to quaternary structure, homodimer. The cofactor is NH4(+). K(+) is required as a cofactor.

It is found in the cytoplasm. The enzyme catalyses (R)-pantothenate + ATP = (R)-4'-phosphopantothenate + ADP + H(+). It functions in the pathway cofactor biosynthesis; coenzyme A biosynthesis; CoA from (R)-pantothenate: step 1/5. Catalyzes the phosphorylation of pantothenate (Pan), the first step in CoA biosynthesis. This chain is Type III pantothenate kinase, found in Bacillus cytotoxicus (strain DSM 22905 / CIP 110041 / 391-98 / NVH 391-98).